The primary structure comprises 556 residues: Urocanate hydratase (556 aa).

Residues 52-53 (GG), Gln130, 176-178 (GMG), Glu196, Arg201, 242-243 (NA), 263-267 (QTSAH), 273-274 (YL), and Tyr322 each bind NAD(+). Cys410 is an active-site residue. Gly492 is an NAD(+) binding site.

This sequence belongs to the urocanase family. Requires NAD(+) as cofactor.

Its subcellular location is the cytoplasm. The catalysed reaction is 4-imidazolone-5-propanoate = trans-urocanate + H2O. Its pathway is amino-acid degradation; L-histidine degradation into L-glutamate; N-formimidoyl-L-glutamate from L-histidine: step 2/3. Catalyzes the conversion of urocanate to 4-imidazolone-5-propionate. This Shewanella woodyi (strain ATCC 51908 / MS32) protein is Urocanate hydratase.